Consider the following 215-residue polypeptide: Small ribosomal subunit protein uS7 (215 aa).

The protein belongs to the universal ribosomal protein uS7 family. As to quaternary structure, part of the 30S ribosomal subunit.

Functionally, one of the primary rRNA binding proteins, it binds directly to 16S rRNA where it nucleates assembly of the head domain of the 30S subunit. Is located at the subunit interface close to the decoding center. In Thermococcus celer, this protein is Small ribosomal subunit protein uS7.